Reading from the N-terminus, the 471-residue chain is Serine hydroxymethyltransferase 4 (471 aa).

Methionine 1 is subject to N-acetylmethionine. Residue serine 39 participates in L-serine binding. 3 residues coordinate pemetrexed: serine 39, tyrosine 59, and glutamate 61. Glutamate 61 and tyrosine 69 together coordinate L-serine. Residues 105-107 (SGS), histidine 134, serine 190, and histidine 218 contribute to the pemetrexed site. L-serine-binding residues include histidine 218 and lysine 244. N6-(pyridoxal phosphate)lysine is present on lysine 244. Glycine 290 contributes to the pemetrexed binding site. Methotrexate is bound at residue lysine 373. Residue arginine 389 coordinates L-serine. Position 389 (arginine 389) interacts with pemetrexed.

Belongs to the SHMT family. As to quaternary structure, homotetramer. Interacts with UBP16. The cofactor is pyridoxal 5'-phosphate. As to expression, mostly expressed in flowers, less abundant in roots, inflorescence stems, and siliques, and barely detectable in leaves.

Its subcellular location is the cytoplasm. The catalysed reaction is (6R)-5,10-methylene-5,6,7,8-tetrahydrofolate + glycine + H2O = (6S)-5,6,7,8-tetrahydrofolate + L-serine. It functions in the pathway one-carbon metabolism; tetrahydrofolate interconversion. Its activity is regulated as follows. Inhibited by the antifolate drugs methotrexate and pemetrexed. In terms of biological role, catalyzes the interconversion of serine and glycine with the conversion of tetrahydrofolate (THF) into 5,10-methylene-THF. The protein is Serine hydroxymethyltransferase 4 of Arabidopsis thaliana (Mouse-ear cress).